The sequence spans 324 residues: NADH-cytochrome b5 reductase 2 (324 aa).

The chain crosses the membrane as a helical span at residues 31–47; the sequence is IPLIGGITLAAGAGYYY. The FAD-binding FR-type domain maps to 70-178; that stretch reads QGWIGLKLAH…KGPLPKYPWE (109 aa). Residue 181 to 216 coordinates FAD; the sequence is KHDHICLIAGGTGITPMYQLVRKIFSNPEDKTKVTL.

It belongs to the flavoprotein pyridine nucleotide cytochrome reductase family. FAD serves as cofactor.

The protein resides in the mitochondrion outer membrane. It carries out the reaction 2 Fe(III)-[cytochrome b5] + NADH = 2 Fe(II)-[cytochrome b5] + NAD(+) + H(+). May mediate the reduction of outer membrane cytochrome b5. This is NADH-cytochrome b5 reductase 2 (MCR1) from Ajellomyces capsulatus (strain NAm1 / WU24) (Darling's disease fungus).